Reading from the N-terminus, the 473-residue chain is ATP synthase subunit beta 2 (473 aa).

ATP is bound at residue 158-165 (GGAGVGKT).

This sequence belongs to the ATPase alpha/beta chains family. As to quaternary structure, F-type ATPases have 2 components, CF(1) - the catalytic core - and CF(0) - the membrane proton channel. CF(1) has five subunits: alpha(3), beta(3), gamma(1), delta(1), epsilon(1). CF(0) has three main subunits: a(1), b(2) and c(9-12). The alpha and beta chains form an alternating ring which encloses part of the gamma chain. CF(1) is attached to CF(0) by a central stalk formed by the gamma and epsilon chains, while a peripheral stalk is formed by the delta and b chains.

It is found in the cell membrane. It catalyses the reaction ATP + H2O + 4 H(+)(in) = ADP + phosphate + 5 H(+)(out). Functionally, produces ATP from ADP in the presence of a proton gradient across the membrane. The catalytic sites are hosted primarily by the beta subunits. This Listeria welshimeri serovar 6b (strain ATCC 35897 / DSM 20650 / CCUG 15529 / CIP 8149 / NCTC 11857 / SLCC 5334 / V8) protein is ATP synthase subunit beta 2.